The primary structure comprises 246 residues: UPF0736 protein Aflv_2136 (246 aa).

It belongs to the UPF0736 family.

The polypeptide is UPF0736 protein Aflv_2136 (Anoxybacillus flavithermus (strain DSM 21510 / WK1)).